A 350-amino-acid polypeptide reads, in one-letter code: Cephaeline 6'-O-methyltransferase IpeOMT1 (350 aa).

Positions 193, 216, 236, 237, and 250 each coordinate S-adenosyl-L-methionine. His-254 functions as the Proton acceptor in the catalytic mechanism.

Belongs to the class I-like SAM-binding methyltransferase superfamily. Cation-independent O-methyltransferase family. Expressed in roots.

Its subcellular location is the cytoplasm. The protein resides in the cytosol. It carries out the reaction cephaeline + S-adenosyl-L-methionine = emetine + S-adenosyl-L-homocysteine + H(+). The enzyme catalyses deacetylisoipecoside + S-adenosyl-L-methionine = 6-O-methyldeacetylisoipecoside + S-adenosyl-L-homocysteine + H(+). It catalyses the reaction 7-O-methyldeacetylisoipecoside + S-adenosyl-L-methionine = 6,7-O,O-dimethyldeacetylisoipecoside + S-adenosyl-L-homocysteine + H(+). The catalysed reaction is norcoclaurine + S-adenosyl-L-methionine = coclaurine + S-adenosyl-L-homocysteine + H(+). It carries out the reaction (S)-norprotosinomenine + S-adenosyl-L-methionine = (S)-6-O-methylnorprotosinomenine + S-adenosyl-L-homocysteine + H(+). The enzyme catalyses (R)-norprotosinomenine + S-adenosyl-L-methionine = (R)-6-O-methylnorprotosinomenine + S-adenosyl-L-homocysteine + H(+). It participates in alkaloid biosynthesis. Its function is as follows. O-methyltransferase involved in the biosynthesis of ipecac and benzylisoquinoline monoterpenoid-isoquinoline alkaloids natural products, starting by the condensation of dopamine and secologanin, and including emetine and cephaeline, drugs used both as anti-protozoal (e.g. treatment of ameobiasis) and as emetic agents. Mediates cephaeline 6'-O-methylation to produce emetine. Catalyzes the 6-O-methylation of N-deacetylisoipecoside, 7-O-methyl-N-deacetylisoipecoside, isococlaurine, norcoclaurine, (S)-norprotosinomenine and (R)-norprotosinomenine, and, with a lower efficiency, of 4'-O-methyllaudanosoline, isoorientaline and protosinomenine. Supports also the 4'-O-methylation of nororientaline. This chain is Cephaeline 6'-O-methyltransferase IpeOMT1, found in Carapichea ipecacuanha (Ipecac).